The following is a 304-amino-acid chain: N-acetylmuramic acid 6-phosphate etherase (304 aa).

In terms of domain architecture, SIS spans 60–221 (GVSVLRHGGR…STAVMVRLGY (162 aa)). Glutamate 88 serves as the catalytic Proton donor. Glutamate 119 is a catalytic residue.

It belongs to the GCKR-like family. MurNAc-6-P etherase subfamily. As to quaternary structure, homodimer.

It carries out the reaction N-acetyl-D-muramate 6-phosphate + H2O = N-acetyl-D-glucosamine 6-phosphate + (R)-lactate. Its pathway is amino-sugar metabolism; N-acetylmuramate degradation. In terms of biological role, specifically catalyzes the cleavage of the D-lactyl ether substituent of MurNAc 6-phosphate, producing GlcNAc 6-phosphate and D-lactate. This chain is N-acetylmuramic acid 6-phosphate etherase, found in Thermobifida fusca (strain YX).